A 464-amino-acid polypeptide reads, in one-letter code: Adenylyltransferase and sulfurtransferase MOCS3 (464 aa).

ATP is bound by residues Gly101, Asp122, 129–133, Lys146, and 190–191; these read NNMHR and DN. Positions 231 and 234 each coordinate Zn(2+). The Glycyl thioester intermediate; for adenylyltransferase activity role is filled by Cys248. Residues Cys306 and Cys309 each coordinate Zn(2+). Positions 358 to 462 constitute a Rhodanese domain; that stretch reads KKEQHVLLDV…WAANVNPNFP (105 aa). The Cysteine persulfide intermediate; for sulfurtransferase activity role is filled by Cys422.

The protein in the N-terminal section; belongs to the HesA/MoeB/ThiF family. UBA4 subfamily. The cofactor is Zn(2+).

The protein localises to the cytoplasm. It catalyses the reaction [molybdopterin-synthase sulfur-carrier protein]-C-terminal Gly-Gly + ATP + H(+) = [molybdopterin-synthase sulfur-carrier protein]-C-terminal Gly-Gly-AMP + diphosphate. The enzyme catalyses [molybdopterin-synthase sulfur-carrier protein]-C-terminal Gly-Gly-AMP + S-sulfanyl-L-cysteinyl-[cysteine desulfurase] + AH2 = [molybdopterin-synthase sulfur-carrier protein]-C-terminal-Gly-aminoethanethioate + L-cysteinyl-[cysteine desulfurase] + A + AMP + 2 H(+). It participates in tRNA modification; 5-methoxycarbonylmethyl-2-thiouridine-tRNA biosynthesis. The protein operates within cofactor biosynthesis; molybdopterin biosynthesis. Functionally, plays a central role in 2-thiolation of mcm(5)S(2)U at tRNA wobble positions of cytosolic tRNA(Lys), tRNA(Glu) and tRNA(Gln). Also essential during biosynthesis of the molybdenum cofactor. Acts by mediating the C-terminal thiocarboxylation of sulfur carriers URM1 and MOCS2A. Its N-terminus first activates URM1 and MOCS2A as acyl-adenylates (-COAMP), then the persulfide sulfur on the catalytic cysteine is transferred to URM1 and MOCS2A to form thiocarboxylation (-COSH) of their C-terminus. The reaction probably involves hydrogen sulfide that is generated from the persulfide intermediate and that acts as a nucleophile towards URM1 and MOCS2A. Subsequently, a transient disulfide bond is formed. Does not use thiosulfate as sulfur donor; NFS1 probably acting as a sulfur donor for thiocarboxylation reactions. In Arabidopsis thaliana (Mouse-ear cress), this protein is Adenylyltransferase and sulfurtransferase MOCS3.